Here is a 448-residue protein sequence, read N- to C-terminus: MKGFIDDVDYSVGLLDEGTNLGNVIDNYVYEHTLTGKNAFFVGDLGKIVKKHSQWQNVVAQIKPFYTVKCNSAPAVLEILAALGTGFACSSKNEMALVQELGVPPENIIYISPCKQVSQIKYAAKVGVNIMTCDNEIELKKIARNHPNAKVLLHIATEDNIGGEEGNMKFGTTLKNCRHLLECAKELDVQIIGVKFHVSSACKESQVYVHALSDARCVFDMAGEIGFTMNMLDIGGGFTGTEFQLEEVNHVISPLLDVYFPEGSGVKIISEPGSYYVSSAFTLAVNIIAKKVVENDKFPSGVEKTGSDEPAFMYYMNDGVYGSFASKLSEDLNTIPEVHKKYKEDEPLFTSSLWGPSCDELDQIVESCLLPELNVGDWLIFDNMGADSFHEPSAFNDFQRPAIYYMMSFSDWYEMQDAGITSDSMMKNFFFVPSCIQLSQEDSFSAEA.

This sequence belongs to the Orn/Lys/Arg decarboxylase class-II family. ODC antizyme inhibitor subfamily. As to quaternary structure, monomer. Interacts with OAZ1 and OAZ3; this interaction disrupts the interaction between the antizyme and ODC1. Ubiquitinated, leading to its proteasomal degradation; a process that is reduced in presence of antizyme OAZ1.

It localises to the nucleus. Functionally, antizyme inhibitor (AZI) protein that positively regulates ornithine decarboxylase (ODC) activity and polyamine uptake. AZI is an enzymatically inactive ODC homolog that counteracts the negative effect of ODC antizymes (AZs) OAZ1, OAZ2 and OAZ3 on ODC activity by competing with ODC for antizyme-binding. Inhibits antizyme-dependent ODC degradation and releases ODC monomers from their inactive complex with antizymes, leading to formation of the catalytically active ODC homodimer and restoring polyamine production. The polypeptide is Antizyme inhibitor 1 (AZIN1) (Pongo abelii (Sumatran orangutan)).